The primary structure comprises 822 residues: MEASGGVGGAFLKDVVAYVEVWSSKGTENYSRTFAKQLEDMGATVSKTLNKQVTHVIFKDGYQSTWDKAQKTGAKLVSVLWVEKCRMAGALVDESLFPAVNTDEHLPNLSRKKHKCMQPKDFILKTPENDKRLQKKFEKMAEELQRQKAALDDDVPVLLFESPRSLVYSSPVNVMKRRLQDMKEKRENLSPTSSQMLEQSQQNPCVSLFETSLNISHQPLSSDESFASGSHSSFGDSCGDQERKLGRSANEMTTVTCPSSPVLRASSFYGSASPNHLRQPRPQKAPDSPSKESINCQKDATGAVADSERKQAAGVSQGVPDEKLCLSPTMSIIEEHQVRLGPKNSSAKRKRAADLGSSPKGKLKKRYKRKSALAIQLFKSDQSPPSTIRLIPGTPDVEASSYEDYFSPDNLKERNSERLPPEAQQLASPSLFHCRGLSKWERRNMLEMCDFTCIGEKHRSISSISDLISKSASSLEKPVKEEVNTASTCLLLVETSANDSPGLCSQPGPQLRDDTGPEGSSHPDTLSSSAHHITPLKGNSTETRDPGDGKGSPKEGSTPPASASPEDEVHICNLSLGEDCNVEKSVEEKENIATGYSESVKNGPGRPDPSDSSCTGLVRPQQKPKKSEKEEKPTRTLVMTSMPSEKQTLIIQVVSTLKGFSFAPEVCETTTHVLVGKSARTLNVLMGIARGCWILSYEWVLLSLELGHWISEEPFELSETFPAAPICRLERHLSTQQYQGTLFANQPKMFIAPASSPPRAKLCELVLLCGGQVSPAPQLASLIIGPYKGKKKARIQYLSEKWVLDSITQHKICDFNNYQLLQ.

In terms of domain architecture, BRCT 1 spans 10–99; sequence AFLKDVVAYV…ALVDESLFPA (90 aa). Disordered stretches follow at residues 182-203, 219-243, and 266-295; these read MKEKRENLSPTSSQMLEQSQQN, PLSSDESFASGSHSSFGDSCGDQER, and SSFYGSASPNHLRQPRPQKAPDSPSKESIN. Composition is skewed to polar residues over residues 189-203 and 219-235; these read LSPTSSQMLEQSQQN and PLSSDESFASGSHSSFG. Phosphoserine occurs at positions 273, 290, and 327. Phosphothreonine is present on Thr-329. Disordered stretches follow at residues 335-366, 498-567, and 594-636; these read EHQVRLGPKNSSAKRKRAADLGSSPKGKLKKR, NDSP…SPED, and TGYS…PTRT. Positions 522–541 are enriched in polar residues; sequence HPDTLSSSAHHITPLKGNST. 2 stretches are compositionally biased toward basic and acidic residues: residues 542–553 and 625–634; these read ETRDPGDGKGSP and KKSEKEEKPT. BRCT domains lie at 627–717 and 738–820; these read SEKE…PFEL and YQGT…NYQL.

As to quaternary structure, interacts with CDC27 and maybe other components of the APC/C complex. Interacts with histone variant H2AX under DNA damage conditions. High levels of expression are found in the developing forebrain and, in particular, in the walls of the lateral ventricles.

The protein localises to the cytoplasm. It localises to the cytoskeleton. It is found in the microtubule organizing center. Its subcellular location is the centrosome. Its function is as follows. Implicated in chromosome condensation and DNA damage induced cellular responses. May play a role in neurogenesis and regulation of the size of the cerebral cortex. In Mus musculus (Mouse), this protein is Microcephalin.